A 285-amino-acid chain; its full sequence is Bifunctional protein FolD (285 aa).

NADP(+)-binding positions include 165–167 (GRS) and Ser190.

The protein belongs to the tetrahydrofolate dehydrogenase/cyclohydrolase family. As to quaternary structure, homodimer.

The catalysed reaction is (6R)-5,10-methylene-5,6,7,8-tetrahydrofolate + NADP(+) = (6R)-5,10-methenyltetrahydrofolate + NADPH. It carries out the reaction (6R)-5,10-methenyltetrahydrofolate + H2O = (6R)-10-formyltetrahydrofolate + H(+). Its pathway is one-carbon metabolism; tetrahydrofolate interconversion. Catalyzes the oxidation of 5,10-methylenetetrahydrofolate to 5,10-methenyltetrahydrofolate and then the hydrolysis of 5,10-methenyltetrahydrofolate to 10-formyltetrahydrofolate. The chain is Bifunctional protein FolD from Staphylococcus carnosus (strain TM300).